The following is a 147-amino-acid chain: uncharacterized protein (147 aa).

The HTH marR-type domain maps to 1-137 (MRDNTIGSLI…LYELMTKVHK (137 aa)). Residues 53–76 (QMELAEKVTVTQGGISRMLTRLEK) constitute a DNA-binding region (H-T-H motif).

This is an uncharacterized protein from Bacillus cereus (strain ATCC 14579 / DSM 31 / CCUG 7414 / JCM 2152 / NBRC 15305 / NCIMB 9373 / NCTC 2599 / NRRL B-3711).